Here is a 212-residue protein sequence, read N- to C-terminus: Root-specific lectin (212 aa).

A signal peptide spans 1 to 26 (MKMMSTRALALGAAAVLAFAAATAHA). Pyrrolidone carboxylic acid is present on glutamine 27. 4 Chitin-binding type-1 domains span residues 27 to 68 (QRCG…ACYT), 69 to 111 (SKRC…PCRA), 112 to 154 (DIKC…ACST), and 155 to 197 (DKPC…GCDG). 16 cysteine pairs are disulfide-bonded: cysteine 29-cysteine 44, cysteine 38-cysteine 50, cysteine 43-cysteine 57, cysteine 61-cysteine 66, cysteine 72-cysteine 87, cysteine 81-cysteine 93, cysteine 86-cysteine 100, cysteine 104-cysteine 109, cysteine 115-cysteine 130, cysteine 124-cysteine 136, cysteine 129-cysteine 143, cysteine 147-cysteine 152, cysteine 158-cysteine 173, cysteine 167-cysteine 179, cysteine 172-cysteine 186, and cysteine 190-cysteine 195. Residue 36-38 (MEC) coordinates substrate. Residue 88–99 (SQWGYCGFGAEY) coordinates substrate. A substrate-binding site is contributed by 140 to 141 (SE). N-linked (GlcNAc...) asparagine glycosylation occurs at asparagine 206.

As to expression, in roots.

Its function is as follows. Carbohydrate binding. In Hordeum vulgare (Barley), this protein is Root-specific lectin.